Consider the following 158-residue polypeptide: Transmembrane protein 50B (158 aa).

A2 bears the N-acetylalanine mark. 4 consecutive transmembrane segments (helical) span residues 28-48 (VVAG…AVVY), 56-76 (HAFH…NAVS), 98-118 (WLFI…WILF), and 128-148 (VYPG…TLIY).

It belongs to the UPF0220 family. As to quaternary structure, may form homotrimers or homodimers.

It localises to the endoplasmic reticulum membrane. The protein resides in the golgi apparatus membrane. This is Transmembrane protein 50B (TMEM50B) from Bos taurus (Bovine).